A 249-amino-acid polypeptide reads, in one-letter code: Triosephosphate isomerase (249 aa).

Substrate is bound at residue 9–11; the sequence is NWK. His95 acts as the Electrophile in catalysis. Glu165 acts as the Proton acceptor in catalysis. Substrate contacts are provided by residues Gly171, Ser210, and 231-232; that span reads GG.

It belongs to the triosephosphate isomerase family. As to quaternary structure, homodimer.

It localises to the cytoplasm. It catalyses the reaction D-glyceraldehyde 3-phosphate = dihydroxyacetone phosphate. The protein operates within carbohydrate biosynthesis; gluconeogenesis. Its pathway is carbohydrate degradation; glycolysis; D-glyceraldehyde 3-phosphate from glycerone phosphate: step 1/1. Functionally, involved in the gluconeogenesis. Catalyzes stereospecifically the conversion of dihydroxyacetone phosphate (DHAP) to D-glyceraldehyde-3-phosphate (G3P). This is Triosephosphate isomerase from Hyphomonas neptunium (strain ATCC 15444).